Reading from the N-terminus, the 121-residue chain is Peptidyl-tRNA hydrolase (121 aa).

This sequence belongs to the PTH2 family.

It localises to the cytoplasm. The enzyme catalyses an N-acyl-L-alpha-aminoacyl-tRNA + H2O = an N-acyl-L-amino acid + a tRNA + H(+). Functionally, the natural substrate for this enzyme may be peptidyl-tRNAs which drop off the ribosome during protein synthesis. The sequence is that of Peptidyl-tRNA hydrolase from Sulfurisphaera tokodaii (strain DSM 16993 / JCM 10545 / NBRC 100140 / 7) (Sulfolobus tokodaii).